A 364-amino-acid chain; its full sequence is Dual-specificity RNA methyltransferase RlmN (364 aa).

The active-site Proton acceptor is the glutamate 91. Residues 97-333 (EDDRGTLCIS…TTTRKTRGDD (237 aa)) form the Radical SAM core domain. An intrachain disulfide couples cysteine 104 to cysteine 338. The [4Fe-4S] cluster site is built by cysteine 111, cysteine 115, and cysteine 118. S-adenosyl-L-methionine contacts are provided by residues 164–165 (GE), serine 196, 218–220 (SLH), and asparagine 295. Catalysis depends on cysteine 338, which acts as the S-methylcysteine intermediate.

This sequence belongs to the radical SAM superfamily. RlmN family. Requires [4Fe-4S] cluster as cofactor.

The protein localises to the cytoplasm. It catalyses the reaction adenosine(2503) in 23S rRNA + 2 reduced [2Fe-2S]-[ferredoxin] + 2 S-adenosyl-L-methionine = 2-methyladenosine(2503) in 23S rRNA + 5'-deoxyadenosine + L-methionine + 2 oxidized [2Fe-2S]-[ferredoxin] + S-adenosyl-L-homocysteine. It carries out the reaction adenosine(37) in tRNA + 2 reduced [2Fe-2S]-[ferredoxin] + 2 S-adenosyl-L-methionine = 2-methyladenosine(37) in tRNA + 5'-deoxyadenosine + L-methionine + 2 oxidized [2Fe-2S]-[ferredoxin] + S-adenosyl-L-homocysteine. Specifically methylates position 2 of adenine 2503 in 23S rRNA and position 2 of adenine 37 in tRNAs. m2A2503 modification seems to play a crucial role in the proofreading step occurring at the peptidyl transferase center and thus would serve to optimize ribosomal fidelity. The protein is Dual-specificity RNA methyltransferase RlmN of Dechloromonas aromatica (strain RCB).